A 472-amino-acid polypeptide reads, in one-letter code: Argininosuccinate lyase (472 aa).

It belongs to the lyase 1 family. Argininosuccinate lyase subfamily.

Its subcellular location is the cytoplasm. The catalysed reaction is 2-(N(omega)-L-arginino)succinate = fumarate + L-arginine. It functions in the pathway amino-acid biosynthesis; L-arginine biosynthesis; L-arginine from L-ornithine and carbamoyl phosphate: step 3/3. This is Argininosuccinate lyase from Polynucleobacter necessarius subsp. necessarius (strain STIR1).